The primary structure comprises 837 residues: Outer membrane usher protein HifC (837 aa).

Positions 1–26 are cleaved as a signal peptide; sequence MKTKNFPLNKIAFACTLLLANPVAWA. Residues Cys-813 and Cys-833 are joined by a disulfide bond.

Belongs to the fimbrial export usher family.

The protein localises to the cell outer membrane. Functionally, essential for piliation. This is Outer membrane usher protein HifC (hifC) from Haemophilus influenzae.